Here is a 136-residue protein sequence, read N- to C-terminus: Small ribosomal subunit protein bS6 (136 aa).

The tract at residues 99–136 is disordered; the sequence is QSEMLKAEENRSERRERRERPEHGGHEGLDGDSDKADE. Over residues 103–136 the composition is skewed to basic and acidic residues; the sequence is LKAEENRSERRERRERPEHGGHEGLDGDSDKADE.

This sequence belongs to the bacterial ribosomal protein bS6 family.

Its function is as follows. Binds together with bS18 to 16S ribosomal RNA. This is Small ribosomal subunit protein bS6 from Azotobacter vinelandii (strain DJ / ATCC BAA-1303).